The following is a 155-amino-acid chain: Altered inheritance rate of mitochondria protein 29 (155 aa).

S78 is modified (phosphoserine).

Belongs to the UPF0538 family.

It is found in the cytoplasm. Its function is as follows. May be involved in mitochondrial organization and biogenesis. This chain is Altered inheritance rate of mitochondria protein 29 (AIM29), found in Saccharomyces cerevisiae (strain ATCC 204508 / S288c) (Baker's yeast).